The sequence spans 268 residues: Nickel import ATP-binding protein NikE (268 aa).

Residues 4–252 (LNVCGLSHHY…SSDAGRVLQN (249 aa)) enclose the ABC transporter domain. ATP is bound at residue 45–52 (GRSGCGKS).

It belongs to the ABC transporter superfamily. Nickel importer (TC 3.A.1.5.3) family. As to quaternary structure, the complex is composed of two ATP-binding proteins (NikD and NikE), two transmembrane proteins (NikB and NikC) and a solute-binding protein (NikA).

It localises to the cell inner membrane. It catalyses the reaction Ni(2+)(out) + ATP + H2O = Ni(2+)(in) + ADP + phosphate + H(+). In terms of biological role, part of the ABC transporter complex NikABCDE involved in nickel import. Responsible for energy coupling to the transport system. In Shigella flexneri serotype 5b (strain 8401), this protein is Nickel import ATP-binding protein NikE.